The sequence spans 79 residues: Acyl carrier protein (79 aa).

One can recognise a Carrier domain in the interval 2–77 (SDIEARVKKI…NAVDYATKNQ (76 aa)). S37 is subject to O-(pantetheine 4'-phosphoryl)serine.

It belongs to the acyl carrier protein (ACP) family. Post-translationally, 4'-phosphopantetheine is transferred from CoA to a specific serine of apo-ACP by AcpS. This modification is essential for activity because fatty acids are bound in thioester linkage to the sulfhydryl of the prosthetic group.

The protein resides in the cytoplasm. The protein operates within lipid metabolism; fatty acid biosynthesis. Functionally, carrier of the growing fatty acid chain in fatty acid biosynthesis. This Variovorax paradoxus (strain S110) protein is Acyl carrier protein.